The sequence spans 254 residues: MENSYDSSKWSDSTTPYMVSWSLQSESSDSDWNRFNLGFSSSSFGGNFPADDCVGGIEKAESLSRSHRLAEKRRRDRINSHLTALRKLVPNSDKLDKAALLATVIEQVKELKQKAAESPIFQDLPTEADEVTVQPETISDFESNTNTIIFKASFCCEDQPEAISEIIRVLTKLQLETIQAEIISVGGRMRINFILKDSNCNETTNIAASAKALKQSLCSALNRITSSSTTTSSVCRIRSKRQRWFLSSHYSHNE.

The bHLH domain occupies 62-111 (SLSRSHRLAEKRRRDRINSHLTALRKLVPNSDKLDKAALLATVIEQVKEL).

Homodimer. In terms of tissue distribution, expressed constitutively in roots, stems, and flowers.

It is found in the nucleus. In Arabidopsis thaliana (Mouse-ear cress), this protein is Transcription factor bHLH51 (BHLH51).